A 941-amino-acid polypeptide reads, in one-letter code: Coiled-coil and C2 domain-containing protein 1A (941 aa).

At Thr91 the chain carries Phosphothreonine. 2 disordered regions span residues 183-248 (TINE…PCSP) and 301-336 (SRLP…VPQP). Positions 228 to 239 (APSTTAQTSAKP) are enriched in polar residues. Ser247 bears the Phosphoserine mark. Pro residues predominate over residues 303 to 318 (LPPPPDQLSPEPPLPA). Positions 338–384 (KNLLEALEQRMERYHVAAAQAKAKGDQRKARMHERIVKQYQDAIRAH) form a coiled coil. The disordered stretch occupies residues 428-482 (ANHEEGSDEEEEETPKKNTPAASTAQPKASPSRAPPSGPAPAGKAASKGTSTRAQ). The residue at position 434 (Ser434) is a Phosphoserine. Residues 467–476 (APAGKAASKG) show a composition bias toward low complexity. Residues 475 to 508 (KGTSTRAQQQLAFLEGRKKQLLQAALRAKQKNDV) are a coiled coil. A C2 domain is found at 628 to 762 (RFEQRTFSVI…ETACEVHEIL (135 aa)).

The protein belongs to the CC2D1 family. As to expression, strongly expressed in several brain areas including frontal cortex, cortex, mesencephalon, hippocampus, midbrain and hypothalamus. Also expressed in testis and at low levels in pituitary, liver and kidney. In brain the highest levels are detected in hippocampal pyramidal cells and raphe nuclei.

The protein localises to the cytoplasm. It localises to the nucleus. Its subcellular location is the cytoskeleton. The protein resides in the microtubule organizing center. It is found in the centrosome. Functionally, transcription factor that binds specifically to the DRE (dual repressor element) and represses 5-HT1A gene transcription though this element. Mediates HDAC-independent repression of HTR1A promoter. CAMK2G inhibits CC2D1a-induced repression of the HTR1A. May play a role in the altered regulation of 5-HT1A receptors associated with anxiety and major depression. Performs essential function in controlling functional maturation of synapses. The polypeptide is Coiled-coil and C2 domain-containing protein 1A (Cc2d1a) (Rattus norvegicus (Rat)).